We begin with the raw amino-acid sequence, 210 residues long: Uracil phosphoribosyltransferase (210 aa).

5-phospho-alpha-D-ribose 1-diphosphate is bound by residues arginine 78, arginine 103, and 130 to 138 (DPMLATGGS). Residues isoleucine 193 and 198 to 200 (GDA) contribute to the uracil site. Aspartate 199 lines the 5-phospho-alpha-D-ribose 1-diphosphate pocket.

It belongs to the UPRTase family. Requires Mg(2+) as cofactor.

It catalyses the reaction UMP + diphosphate = 5-phospho-alpha-D-ribose 1-diphosphate + uracil. It functions in the pathway pyrimidine metabolism; UMP biosynthesis via salvage pathway; UMP from uracil: step 1/1. Its activity is regulated as follows. Allosterically activated by GTP. In terms of biological role, catalyzes the conversion of uracil and 5-phospho-alpha-D-ribose 1-diphosphate (PRPP) to UMP and diphosphate. In Salinibacter ruber (strain DSM 13855 / M31), this protein is Uracil phosphoribosyltransferase.